The sequence spans 340 residues: E3 ubiquitin ligase BIG BROTHER-related (340 aa).

Disordered stretches follow at residues 1–56 and 133–182; these read MPME…GVGE and YDED…GNSD. Residues 34–46 are compositionally biased toward polar residues; that stretch reads NRQTGVVSDTGSG. 2 stretches are compositionally biased toward acidic residues: residues 133 to 164 and 173 to 182; these read YDED…EDGL and DDQEDDGNSD. An RING-type; atypical zinc finger spans residues 288 to 329; that stretch reads CVICRLDYEDDEDLILLPCKHSYHSECINNWLKINKVCPVCS.

In terms of processing, auto-ubiquitinated.

It catalyses the reaction S-ubiquitinyl-[E2 ubiquitin-conjugating enzyme]-L-cysteine + [acceptor protein]-L-lysine = [E2 ubiquitin-conjugating enzyme]-L-cysteine + N(6)-ubiquitinyl-[acceptor protein]-L-lysine.. The protein operates within protein modification; protein ubiquitination. Functionally, E3 ubiquitin-ligase probably involved in organ size regulation. This is E3 ubiquitin ligase BIG BROTHER-related (BBR) from Arabidopsis thaliana (Mouse-ear cress).